Consider the following 331-residue polypeptide: D-alanine--D-alanine ligase (331 aa).

One can recognise an ATP-grasp domain in the interval 122–328; sequence KLWYDAIGIP…FHEFLADCIE (207 aa). 152 to 207 contributes to the ATP binding site; that stretch reads AFDKWGKLFVKAARQGSSVGCYSVTNIEQLSDAIDKAFGFSHQVLVEKAVKPRELE. Mg(2+) is bound by residues Asp-282, Glu-295, and Asn-297.

This sequence belongs to the D-alanine--D-alanine ligase family. It depends on Mg(2+) as a cofactor. Mn(2+) serves as cofactor.

The protein localises to the cytoplasm. It catalyses the reaction 2 D-alanine + ATP = D-alanyl-D-alanine + ADP + phosphate + H(+). It participates in cell wall biogenesis; peptidoglycan biosynthesis. Functionally, cell wall formation. This chain is D-alanine--D-alanine ligase, found in Vibrio vulnificus (strain YJ016).